A 1357-amino-acid polypeptide reads, in one-letter code: DNA-directed RNA polymerase subunit beta (1357 aa).

It belongs to the RNA polymerase beta chain family. In terms of assembly, the RNAP catalytic core consists of 2 alpha, 1 beta, 1 beta' and 1 omega subunit. When a sigma factor is associated with the core the holoenzyme is formed, which can initiate transcription.

The catalysed reaction is RNA(n) + a ribonucleoside 5'-triphosphate = RNA(n+1) + diphosphate. DNA-dependent RNA polymerase catalyzes the transcription of DNA into RNA using the four ribonucleoside triphosphates as substrates. The sequence is that of DNA-directed RNA polymerase subunit beta from Pseudomonas fluorescens (strain ATCC BAA-477 / NRRL B-23932 / Pf-5).